The following is a 352-amino-acid chain: Nicotinate-nucleotide--dimethylbenzimidazole phosphoribosyltransferase (352 aa).

The Proton acceptor role is filled by Glu-318.

It belongs to the CobT family.

It catalyses the reaction 5,6-dimethylbenzimidazole + nicotinate beta-D-ribonucleotide = alpha-ribazole 5'-phosphate + nicotinate + H(+). It functions in the pathway nucleoside biosynthesis; alpha-ribazole biosynthesis; alpha-ribazole from 5,6-dimethylbenzimidazole: step 1/2. In terms of biological role, catalyzes the synthesis of alpha-ribazole-5'-phosphate from nicotinate mononucleotide (NAMN) and 5,6-dimethylbenzimidazole (DMB). This Azotobacter vinelandii (strain DJ / ATCC BAA-1303) protein is Nicotinate-nucleotide--dimethylbenzimidazole phosphoribosyltransferase.